The following is a 318-amino-acid chain: Lymphatic vessel endothelial hyaluronic acid receptor 1 (318 aa).

Positions 1-23 are cleaved as a signal peptide; the sequence is MLQHTSLVLLLASIWTTRHPVQG. The Extracellular segment spans residues 24 to 234; sequence ADLVQDLSIS…EAAGFGGVPT (211 aa). The region spanning 39-129 is the Link domain; that stretch reads GVALVGRNKN…SQKFKAYCHN (91 aa). Asn-52 is a glycosylation site (N-linked (GlcNAc...) asparagine). 2 disulfide bridges follow: Cys-60/Cys-127 and Cys-84/Cys-105. Residue Asn-129 is glycosylated (N-linked (GlcNAc...) asparagine). The helical transmembrane segment at 235 to 255 threads the bilayer; sequence ALLVLALLFFGAAAVLAVCYV. At 256 to 318 the chain is on the cytoplasmic side; it reads KRYVKAFPFT…TTVRCLEAEV (63 aa). The segment covering 284 to 305 has biased composition (basic and acidic residues); sequence ADDVNANEESKKTIKNPEEAKS. A disordered region spans residues 284–318; that stretch reads ADDVNANEESKKTIKNPEEAKSPPKTTVRCLEAEV.

In terms of assembly, homodimer; disulfide-linked. Interacts with PDGFB and IGFBP3. Forms a transient ternary complex with PDGFB and PDGFRB in TGN. In terms of processing, O-glycosylated.

The protein localises to the membrane. Functionally, ligand-specific transporter trafficking between intracellular organelles (TGN) and the plasma membrane. Plays a role in autocrine regulation of cell growth mediated by growth regulators containing cell surface retention sequence binding (CRS). May act as a hyaluronan (HA) transporter, either mediating its uptake for catabolism within lymphatic endothelial cells themselves, or its transport into the lumen of afferent lymphatic vessels for subsequent re-uptake and degradation in lymph nodes. Binds to pericelluar hyaluronan matrices deposited on the surface of leukocytes and facilitates cell adhesion and migration through lymphatic endothelium. The chain is Lymphatic vessel endothelial hyaluronic acid receptor 1 (Lyve1) from Mus musculus (Mouse).